A 624-amino-acid polypeptide reads, in one-letter code: Phosphomethylpyrimidine synthase (624 aa).

Residues 75 to 99 form a disordered region; it reads SPWIESRGDTESYTGRTPFALDDGL. Residues Asn226, Met255, Tyr284, His320, 340–342, 381–384, and Glu420 contribute to the substrate site; these read SRG and DGLR. His424 is a binding site for Zn(2+). Tyr447 provides a ligand contact to substrate. His488 provides a ligand contact to Zn(2+). [4Fe-4S] cluster-binding residues include Cys568, Cys571, and Cys576.

This sequence belongs to the ThiC family. Homodimer. [4Fe-4S] cluster is required as a cofactor.

The enzyme catalyses 5-amino-1-(5-phospho-beta-D-ribosyl)imidazole + S-adenosyl-L-methionine = 4-amino-2-methyl-5-(phosphooxymethyl)pyrimidine + CO + 5'-deoxyadenosine + formate + L-methionine + 3 H(+). It functions in the pathway cofactor biosynthesis; thiamine diphosphate biosynthesis. Its function is as follows. Catalyzes the synthesis of the hydroxymethylpyrimidine phosphate (HMP-P) moiety of thiamine from aminoimidazole ribotide (AIR) in a radical S-adenosyl-L-methionine (SAM)-dependent reaction. The polypeptide is Phosphomethylpyrimidine synthase (Albidiferax ferrireducens (strain ATCC BAA-621 / DSM 15236 / T118) (Rhodoferax ferrireducens)).